Reading from the N-terminus, the 360-residue chain is sn-glycerol-3-phosphate import ATP-binding protein UgpC (360 aa).

The region spanning 4–235 (LSLKGVRKSY…PATTFVASFI (232 aa)) is the ABC transporter domain. 37 to 44 (GPSGCGKS) is an ATP binding site.

Belongs to the ABC transporter superfamily. sn-glycerol-3-phosphate importer (TC 3.A.1.1.3) family. The complex is composed of two ATP-binding proteins (UgpC), two transmembrane proteins (UgpA and UgpE) and a solute-binding protein (UgpB).

The protein resides in the cell inner membrane. The enzyme catalyses sn-glycerol 3-phosphate(out) + ATP + H2O = sn-glycerol 3-phosphate(in) + ADP + phosphate + H(+). In terms of biological role, part of the ABC transporter complex UgpBAEC involved in sn-glycerol-3-phosphate (G3P) import. Responsible for energy coupling to the transport system. The chain is sn-glycerol-3-phosphate import ATP-binding protein UgpC from Burkholderia thailandensis (strain ATCC 700388 / DSM 13276 / CCUG 48851 / CIP 106301 / E264).